A 306-amino-acid chain; its full sequence is Ribonuclease Z (306 aa).

Residues His63, His65, Asp67, His68, His141, Asp211, and His269 each contribute to the Zn(2+) site. Asp67 acts as the Proton acceptor in catalysis.

The protein belongs to the RNase Z family. As to quaternary structure, homodimer. Zn(2+) serves as cofactor.

The catalysed reaction is Endonucleolytic cleavage of RNA, removing extra 3' nucleotides from tRNA precursor, generating 3' termini of tRNAs. A 3'-hydroxy group is left at the tRNA terminus and a 5'-phosphoryl group is left at the trailer molecule.. Zinc phosphodiesterase, which displays some tRNA 3'-processing endonuclease activity. Probably involved in tRNA maturation, by removing a 3'-trailer from precursor tRNA. In Staphylococcus aureus (strain MSSA476), this protein is Ribonuclease Z.